A 287-amino-acid polypeptide reads, in one-letter code: Cis-prenyltransferase 7, chloroplastic (287 aa).

A chloroplast-targeting transit peptide spans 1–34 (MLSLGFSLPPPSDNKLIITNNNQYNYRTNLANVC). D61 is a catalytic residue.

This sequence belongs to the UPP synthase family. Requires Mg(2+) as cofactor. As to expression, expressed in leaf trichomes and stem trichomes.

The protein localises to the plastid. It is found in the chloroplast. Its function is as follows. Uses geranylgeranyl diphosphate to catalyze the cis-prenyl chain elongation and produce polyprenyl diphosphate with a chain of 35 carbons. The chain is Cis-prenyltransferase 7, chloroplastic from Solanum lycopersicum (Tomato).